A 230-amino-acid polypeptide reads, in one-letter code: 5'-methylthioadenosine/S-adenosylhomocysteine nucleosidase (230 aa).

Residue glutamate 12 is the Proton acceptor of the active site. Residues glycine 78, isoleucine 153, and 174 to 175 (ME) contribute to the substrate site. Aspartate 198 serves as the catalytic Proton donor.

Belongs to the PNP/UDP phosphorylase family. MtnN subfamily.

The enzyme catalyses S-adenosyl-L-homocysteine + H2O = S-(5-deoxy-D-ribos-5-yl)-L-homocysteine + adenine. The catalysed reaction is S-methyl-5'-thioadenosine + H2O = 5-(methylsulfanyl)-D-ribose + adenine. It catalyses the reaction 5'-deoxyadenosine + H2O = 5-deoxy-D-ribose + adenine. The protein operates within amino-acid biosynthesis; L-methionine biosynthesis via salvage pathway; S-methyl-5-thio-alpha-D-ribose 1-phosphate from S-methyl-5'-thioadenosine (hydrolase route): step 1/2. Functionally, catalyzes the irreversible cleavage of the glycosidic bond in both 5'-methylthioadenosine (MTA) and S-adenosylhomocysteine (SAH/AdoHcy) to adenine and the corresponding thioribose, 5'-methylthioribose and S-ribosylhomocysteine, respectively. Also cleaves 5'-deoxyadenosine, a toxic by-product of radical S-adenosylmethionine (SAM) enzymes, into 5-deoxyribose and adenine. The chain is 5'-methylthioadenosine/S-adenosylhomocysteine nucleosidase from Shewanella loihica (strain ATCC BAA-1088 / PV-4).